The chain runs to 497 residues: Nuclear pore complex protein npp-16 (497 aa).

Disordered stretches follow at residues 76 to 95 (VPRR…APRK), 210 to 308 (TKKS…SAPK), and 359 to 379 (MENQ…GEYV). 2 stretches are compositionally biased toward basic and acidic residues: residues 231 to 240 (KDGDKPKETP) and 250 to 260 (KPAEPSEEPKA). The interval 390 to 497 (EPDAVLSSKV…FTDKILEVAV (108 aa)) is ranBD1.

In terms of assembly, interacts with importin beta imb-1. Interacts with DNA-directed RNA polymerase III subunit rpc-1. Interacts with TATA-box-binding protein tbp-1. Interacts with GTF3C5 homolog tftc-5. Interacts with GTF3C3 homolog tftc-3.

The protein resides in the nucleus. Its subcellular location is the nuclear pore complex. It is found in the nucleus membrane. Component of the nuclear pore complex. Plays a direct role in nuclear protein import. Required for anoxia-induced prophase arrest; may function in concert with cdk-1 to arrest prophase blastomeres in response to anoxia. This Caenorhabditis elegans protein is Nuclear pore complex protein npp-16.